The sequence spans 556 residues: Formate--tetrahydrofolate ligase (556 aa).

ATP is bound at residue 65 to 72; the sequence is TAAGEGKS.

It belongs to the formate--tetrahydrofolate ligase family.

It carries out the reaction (6S)-5,6,7,8-tetrahydrofolate + formate + ATP = (6R)-10-formyltetrahydrofolate + ADP + phosphate. It participates in one-carbon metabolism; tetrahydrofolate interconversion. The chain is Formate--tetrahydrofolate ligase from Elusimicrobium minutum (strain Pei191).